Reading from the N-terminus, the 326-residue chain is Interleukin-1-binding protein (326 aa).

Residues 1 to 18 (MSILPVIFLSIFFYSSFV) form the signal peptide. Ig-like domains are found at residues 24 to 115 (PECI…LNLT), 122 to 212 (SNID…RIVK), and 221 to 322 (PSTM…KTVT). A disulfide bridge connects residues Cys48 and Cys99. N-linked (GlcNAc...) asparagine; by host glycans are attached at residues Asn80, Asn103, and Asn113. Cys143 and Cys194 form a disulfide bridge. 2 N-linked (GlcNAc...) asparagine; by host glycosylation sites follow: Asn206 and Asn237. An intrachain disulfide couples Cys242 to Cys309.

It belongs to the interleukin-1 receptor family. Interacts with mouse Il1b.

The protein localises to the secreted. Functionally, may reduce the host inflammatory response by interacting with inteleukin-1 beta (Il1b) and thus decreasing the association between IL1B and its cellular receptor. The polypeptide is Interleukin-1-binding protein (OPG201) (Vaccinia virus (strain Ankara) (VACV)).